The primary structure comprises 707 residues: MTKKLEHEYIAHTERPALTWDEQGQPYSTEYDDVYYSTTDALAETRFVFLDKNNLAARWPHLTHQQTFTVCETGFGAGLNFLATWQLWRSTRPSGRMHFISFEKHPLNSAQIAKALNRWPQFAALSEQLCALYPPSSAPGFHHITLDEGQVQLTLYFGDAKTGLEQLVLAHGAINKIENRSSCIGDKQQLVDAWYFDGFTPAKNPSIWQPCIFTLAAELSKSTTTFATFTSARSVRDAIENAGFKWQKVPGFGLKREMLFGTFEQHPFAQVDPNKAPTTAHRSYRKRNGVQHSWHLQTANSEHQPPKTAIVIGGGLAGAHAAHALALRGVNVTLLERAPNLANGASSNLQGLVYTRLSLSGNPLSRFNMAAQLYADRFYHSHNFYTTCGEASGVLHLATSNAIEKQLRNIGEQHASTDPNPIFNWVEQQDTEQAVGVSTSTGGLFIRNSGWLNPVQLCHALTNHPRITKLFNSDAAQLQQDAHGQWFALTNDGHKLASADITVICTARDAKHLAQTAYLPMRNIRGQVSHLSSHGLSQRLHASVCGAGYIAPAQSGIHCAGASFNLHENTLDLREEDHQFNIDNLASMSKSLTFNPPLTTLDGKVGFRATTPDYFPIVGPVPIRDEFCERFAGYRKRAATPIPQTGPYYRGLYVSVGYGSRGLAYTPLATESLCHSIFGELQPIATETLLHLHPARFLFRDLTRNRI.

A tRNA (mnm(5)s(2)U34)-methyltransferase region spans residues 1–264 (MTKKLEHEYI…KREMLFGTFE (264 aa)). Residues 312 to 707 (IGGGLAGAHA…LFRDLTRNRI (396 aa)) form an FAD-dependent cmnm(5)s(2)U34 oxidoreductase region.

It in the N-terminal section; belongs to the methyltransferase superfamily. tRNA (mnm(5)s(2)U34)-methyltransferase family. This sequence in the C-terminal section; belongs to the DAO family. It depends on FAD as a cofactor.

Its subcellular location is the cytoplasm. It carries out the reaction 5-aminomethyl-2-thiouridine(34) in tRNA + S-adenosyl-L-methionine = 5-methylaminomethyl-2-thiouridine(34) in tRNA + S-adenosyl-L-homocysteine + H(+). Functionally, catalyzes the last two steps in the biosynthesis of 5-methylaminomethyl-2-thiouridine (mnm(5)s(2)U) at the wobble position (U34) in tRNA. Catalyzes the FAD-dependent demodification of cmnm(5)s(2)U34 to nm(5)s(2)U34, followed by the transfer of a methyl group from S-adenosyl-L-methionine to nm(5)s(2)U34, to form mnm(5)s(2)U34. The chain is tRNA 5-methylaminomethyl-2-thiouridine biosynthesis bifunctional protein MnmC from Saccharophagus degradans (strain 2-40 / ATCC 43961 / DSM 17024).